The following is a 303-amino-acid chain: uncharacterized protein (303 aa).

4 consecutive transmembrane segments (helical) span residues phenylalanine 55–glutamine 77, proline 92–isoleucine 111, phenylalanine 208–leucine 230, and isoleucine 240–isoleucine 257.

It localises to the cell membrane. This is an uncharacterized protein from Bacillus subtilis (strain 168).